Here is a 180-residue protein sequence, read N- to C-terminus: Large ribosomal subunit protein uL6 (180 aa).

Belongs to the universal ribosomal protein uL6 family. As to quaternary structure, part of the 50S ribosomal subunit.

This protein binds to the 23S rRNA, and is important in its secondary structure. It is located near the subunit interface in the base of the L7/L12 stalk, and near the tRNA binding site of the peptidyltransferase center. This is Large ribosomal subunit protein uL6 from Clostridium botulinum (strain Langeland / NCTC 10281 / Type F).